The sequence spans 304 residues: Killer cell immunoglobulin-like receptor 2DS4 (304 aa).

The first 21 residues, 1–21 (MSLMVIIMACVGFFLLQGAWP), serve as a signal peptide directing secretion. At 22–245 (QEGVHRKPSF…SKTGNPRHLH (224 aa)) the chain is on the extracellular side. 2 Ig-like C2-type domains span residues 42–107 (EETV…VPHS) and 142–205 (GENV…FRDA). Residues C49 and C100 are joined by a disulfide bond. N-linked (GlcNAc...) asparagine glycosylation is found at N67, N84, N144, N178, and N211. The cysteines at positions 149 and 198 are disulfide-linked. The tract at residues 220–239 (VTGNPSNSWPSPTEPSSKTG) is disordered. A helical membrane pass occupies residues 246–265 (VLIGTSVVKIPFTILLFFLL). At 266-304 (HRWCSDKKNAAVMDQEPAGNRTVNSEDSDEQDHQEVSYA) the chain is on the cytoplasmic side. The segment at 280 to 304 (QEPAGNRTVNSEDSDEQDHQEVSYA) is disordered.

The protein belongs to the immunoglobulin superfamily. As to quaternary structure, interacts with HLA-F; this interaction is direct.

It is found in the cell membrane. Functionally, receptor on natural killer (NK) cells for HLA-C alleles. Does not inhibit the activity of NK cells. The sequence is that of Killer cell immunoglobulin-like receptor 2DS4 from Homo sapiens (Human).